Reading from the N-terminus, the 301-residue chain is GTP cyclohydrolase FolE2 (301 aa).

Belongs to the GTP cyclohydrolase IV family.

The catalysed reaction is GTP + H2O = 7,8-dihydroneopterin 3'-triphosphate + formate + H(+). It participates in cofactor biosynthesis; 7,8-dihydroneopterin triphosphate biosynthesis; 7,8-dihydroneopterin triphosphate from GTP: step 1/1. In terms of biological role, converts GTP to 7,8-dihydroneopterin triphosphate. In Pseudomonas putida (strain GB-1), this protein is GTP cyclohydrolase FolE2.